We begin with the raw amino-acid sequence, 361 residues long: Phospho-N-acetylmuramoyl-pentapeptide-transferase (361 aa).

10 helical membrane-spanning segments follow: residues 17–37, 66–86, 90–110, 129–149, 162–182, 197–217, 232–252, 261–281, 286–306, and 340–360; these read SIYL…LFAG, GTPT…SIFI, TNSL…IGFI, LLFQ…IGLT, ISAY…QIVL, GLAI…AYFT, VGSG…LGFL, IFMG…IAII, LMLP…ILQV, and FWIG…MRGI.

It belongs to the glycosyltransferase 4 family. MraY subfamily. The cofactor is Mg(2+).

It localises to the cell inner membrane. The enzyme catalyses UDP-N-acetyl-alpha-D-muramoyl-L-alanyl-gamma-D-glutamyl-meso-2,6-diaminopimeloyl-D-alanyl-D-alanine + di-trans,octa-cis-undecaprenyl phosphate = di-trans,octa-cis-undecaprenyl diphospho-N-acetyl-alpha-D-muramoyl-L-alanyl-D-glutamyl-meso-2,6-diaminopimeloyl-D-alanyl-D-alanine + UMP. Its pathway is cell wall biogenesis; peptidoglycan biosynthesis. Its function is as follows. Catalyzes the initial step of the lipid cycle reactions in the biosynthesis of the cell wall peptidoglycan: transfers peptidoglycan precursor phospho-MurNAc-pentapeptide from UDP-MurNAc-pentapeptide onto the lipid carrier undecaprenyl phosphate, yielding undecaprenyl-pyrophosphoryl-MurNAc-pentapeptide, known as lipid I. The polypeptide is Phospho-N-acetylmuramoyl-pentapeptide-transferase (Fusobacterium nucleatum subsp. nucleatum (strain ATCC 25586 / DSM 15643 / BCRC 10681 / CIP 101130 / JCM 8532 / KCTC 2640 / LMG 13131 / VPI 4355)).